The chain runs to 424 residues: MNWPVRVLVVDDSAFSRRLVTDILQADPDIQVVGYARNGREALEKVASLQPRVVTLDQEMPVMDGLTTLTALMAGNPVAVIMLSSHTAAGAAVTIKALELGAVDFIPKPAPGDSLDDFTRQLTEKVKAAARVPVTRLCRGKNCRENTPAPFISPRPGREEAVAAVTGSAAATAAIGSRLSPGRSPGGKEGVAGAVSAGSTRGEAIRPGKGTPAAIKGAVAAGAGRLPGRRPGIEVVAIGTSTGGPAALRQVLTALPGNLPAGIVIVQHMPAGFTGPLARRLDELAALEVREAAAGDILRPGLALLAPAGRQMLLERHGDAVQVHLAAEAGITTLFKPSVDALFLTVAREYGPRSLGVILTGMGNDGLRGLRAIKEQGGTVIAQDEATSVVYGMPRAAVEAGLADLVLPLEDIAPAIVALVTGAG.

The Response regulatory domain maps to 6–123 (RVLVVDDSAF…SLDDFTRQLT (118 aa)). Position 57 is a 4-aspartylphosphate (Asp57). The interval 177–210 (SRLSPGRSPGGKEGVAGAVSAGSTRGEAIRPGKG) is disordered. The 195-residue stretch at 229–423 (RRPGIEVVAI…PAIVALVTGA (195 aa)) folds into the CheB-type methylesterase domain. Catalysis depends on residues Ser241, His268, and Asp365.

The protein belongs to the CheB family. Post-translationally, phosphorylated by CheA. Phosphorylation of the N-terminal regulatory domain activates the methylesterase activity.

It is found in the cytoplasm. It catalyses the reaction [protein]-L-glutamate 5-O-methyl ester + H2O = L-glutamyl-[protein] + methanol + H(+). The catalysed reaction is L-glutaminyl-[protein] + H2O = L-glutamyl-[protein] + NH4(+). In terms of biological role, involved in chemotaxis. Part of a chemotaxis signal transduction system that modulates chemotaxis in response to various stimuli. Catalyzes the demethylation of specific methylglutamate residues introduced into the chemoreceptors (methyl-accepting chemotaxis proteins or MCP) by CheR. Also mediates the irreversible deamidation of specific glutamine residues to glutamic acid. The protein is Protein-glutamate methylesterase/protein-glutamine glutaminase of Moorella thermoacetica (strain ATCC 39073 / JCM 9320).